The chain runs to 764 residues: Polyribonucleotide nucleotidyltransferase (764 aa).

2 residues coordinate Mg(2+): aspartate 555 and aspartate 561. One can recognise a KH domain in the interval 621–680 (PHITSINIPQNKIGEVIGPKGKTINQITEETGANITIEDDGTVFISAVGGESAREAEEKI). The region spanning 692–761 (GDRFLGTVVK…NRGKISLVLV (70 aa)) is the S1 motif domain.

It belongs to the polyribonucleotide nucleotidyltransferase family. It depends on Mg(2+) as a cofactor.

Its subcellular location is the cytoplasm. The enzyme catalyses RNA(n+1) + phosphate = RNA(n) + a ribonucleoside 5'-diphosphate. Its function is as follows. Involved in mRNA degradation. Catalyzes the phosphorolysis of single-stranded polyribonucleotides processively in the 3'- to 5'-direction. In Corynebacterium jeikeium (strain K411), this protein is Polyribonucleotide nucleotidyltransferase.